The chain runs to 159 residues: G-protein-signaling modulator 3 (159 aa).

Residues Met1 to Gly54 form a disordered region. A phosphoserine mark is found at Ser34, Ser38, Ser55, and Ser58. Residues Ser34–Gly43 are compositionally biased toward pro residues. The residue at position 61 (Thr61) is a Phosphothreonine. The GoLoco 1 domain maps to Thr61 to Phe83. The segment at Glu77–Pro97 is disordered. Positions Glu87–Pro97 are enriched in pro residues. 2 GoLoco domains span residues Lys103–Pro125 and Gly131–Pro154.

It is found in the cytoplasm. Interacts with subunit of G(i) alpha proteins and regulates the activation of G(i) alpha proteins. In Mus musculus (Mouse), this protein is G-protein-signaling modulator 3 (Gpsm3).